The sequence spans 127 residues: Large ribosomal subunit protein bL12 (127 aa).

It belongs to the bacterial ribosomal protein bL12 family. Homodimer. Part of the ribosomal stalk of the 50S ribosomal subunit. Forms a multimeric L10(L12)X complex, where L10 forms an elongated spine to which 2 to 4 L12 dimers bind in a sequential fashion. Binds GTP-bound translation factors.

Its function is as follows. Forms part of the ribosomal stalk which helps the ribosome interact with GTP-bound translation factors. Is thus essential for accurate translation. The protein is Large ribosomal subunit protein bL12 of Leptospira interrogans serogroup Icterohaemorrhagiae serovar copenhageni (strain Fiocruz L1-130).